The primary structure comprises 368 residues: UV excision repair protein rhp23 (368 aa).

The Ubiquitin-like domain maps to methionine 1–threonine 77. Composition is skewed to low complexity over residues lysine 76 to proline 88 and alanine 103 to serine 124. The segment at lysine 76–alanine 134 is disordered. 2 positions are modified to phosphoserine: serine 84 and serine 87. UBA domains lie at proline 135–glycine 185 and glutamine 320–histidine 360. The residue at position 364 (serine 364) is a Phosphoserine.

It localises to the nucleus. Its function is as follows. Involved in postreplication repair of UV-damaged DNA. Postreplication repair functions in gap-filling of a daughter strand on replication of damaged DNA. Functionally, protects ubiquitin chains against dissambly by deubiquitinating enzymes thereby promoting protein degradation. This Schizosaccharomyces pombe (strain 972 / ATCC 24843) (Fission yeast) protein is UV excision repair protein rhp23 (rhp23).